The primary structure comprises 197 residues: Recombination protein RecR (197 aa).

A C4-type zinc finger spans residues 56 to 71 (CVRCFSLTDAETCNFC). The Toprim domain maps to 79–174 (RVLCVVETFA…RVTRIAQGLP (96 aa)).

The protein belongs to the RecR family.

May play a role in DNA repair. It seems to be involved in an RecBC-independent recombinational process of DNA repair. It may act with RecF and RecO. This Myxococcus xanthus (strain DK1622) protein is Recombination protein RecR.